The sequence spans 150 residues: uncharacterized protein (150 aa).

A signal peptide spans 1-23 (MYSILIACLVLLLCLIIYVGHRA).

This sequence belongs to the asfivirus EP152R family.

Its subcellular location is the virion. This is an uncharacterized protein from African swine fever virus (isolate Warthog/Namibia/Wart80/1980) (ASFV).